Reading from the N-terminus, the 51-residue chain is Large ribosomal subunit protein bL33 (51 aa).

It belongs to the bacterial ribosomal protein bL33 family.

The sequence is that of Large ribosomal subunit protein bL33 from Francisella philomiragia subsp. philomiragia (strain ATCC 25017 / CCUG 19701 / FSC 153 / O#319-036).